Consider the following 167-residue polypeptide: Translationally-controlled tumor protein homolog (167 aa).

The region spanning 1-167 (MIIFTDVISG…WKHGVSEDKI (167 aa)) is the TCTP domain.

It belongs to the TCTP family.

The protein resides in the cytoplasm. It localises to the cytoskeleton. In terms of biological role, involved in protein synthesis. Involved in microtubule stabilization. This Debaryomyces hansenii (strain ATCC 36239 / CBS 767 / BCRC 21394 / JCM 1990 / NBRC 0083 / IGC 2968) (Yeast) protein is Translationally-controlled tumor protein homolog.